The chain runs to 149 residues: VapC ribonuclease PF0355 (149 aa).

The 115-residue stretch at 8–122 folds into the PINc domain; the sequence is TFDSLALIKM…ITDDSKRYEP (115 aa). Aspartate 10 and aspartate 98 together coordinate Mg(2+).

It belongs to the PINc/VapC protein family. Mg(2+) serves as cofactor.

Functionally, toxic component of a type II toxin-antitoxin (TA) system. An RNase. The sequence is that of VapC ribonuclease PF0355 from Pyrococcus furiosus (strain ATCC 43587 / DSM 3638 / JCM 8422 / Vc1).